A 122-amino-acid polypeptide reads, in one-letter code: Small ribosomal subunit protein uS13 (122 aa).

A disordered region spans residues 95–122 (GLPVHGQRTHTNARTRKGPRRGAVGKKK).

It belongs to the universal ribosomal protein uS13 family. In terms of assembly, part of the 30S ribosomal subunit. Forms a loose heterodimer with protein S19. Forms two bridges to the 50S subunit in the 70S ribosome.

Located at the top of the head of the 30S subunit, it contacts several helices of the 16S rRNA. In the 70S ribosome it contacts the 23S rRNA (bridge B1a) and protein L5 of the 50S subunit (bridge B1b), connecting the 2 subunits; these bridges are implicated in subunit movement. Contacts the tRNAs in the A and P-sites. This Nitratidesulfovibrio vulgaris (strain DSM 19637 / Miyazaki F) (Desulfovibrio vulgaris) protein is Small ribosomal subunit protein uS13.